A 510-amino-acid polypeptide reads, in one-letter code: 2,3-bisphosphoglycerate-independent phosphoglycerate mutase (510 aa).

Positions 13 and 63 each coordinate Mn(2+). The active-site Phosphoserine intermediate is the S63. Substrate contacts are provided by residues H124, 154-155, R186, R192, 262-265, and K334; these read RD and RADR. Mn(2+) is bound by residues D401, H405, D442, H443, and H461.

Belongs to the BPG-independent phosphoglycerate mutase family. Monomer. It depends on Mn(2+) as a cofactor.

It catalyses the reaction (2R)-2-phosphoglycerate = (2R)-3-phosphoglycerate. It participates in carbohydrate degradation; glycolysis; pyruvate from D-glyceraldehyde 3-phosphate: step 3/5. Its function is as follows. Catalyzes the interconversion of 2-phosphoglycerate and 3-phosphoglycerate. The polypeptide is 2,3-bisphosphoglycerate-independent phosphoglycerate mutase (Vibrio parahaemolyticus serotype O3:K6 (strain RIMD 2210633)).